A 217-amino-acid chain; its full sequence is Protein-L-isoaspartate O-methyltransferase (217 aa).

The active site involves S64.

The protein belongs to the methyltransferase superfamily. L-isoaspartyl/D-aspartyl protein methyltransferase family.

The protein localises to the cytoplasm. It catalyses the reaction [protein]-L-isoaspartate + S-adenosyl-L-methionine = [protein]-L-isoaspartate alpha-methyl ester + S-adenosyl-L-homocysteine. Its function is as follows. Catalyzes the methyl esterification of L-isoaspartyl residues in peptides and proteins that result from spontaneous decomposition of normal L-aspartyl and L-asparaginyl residues. It plays a role in the repair and/or degradation of damaged proteins. This chain is Protein-L-isoaspartate O-methyltransferase, found in Nitrobacter winogradskyi (strain ATCC 25391 / DSM 10237 / CIP 104748 / NCIMB 11846 / Nb-255).